The chain runs to 67 residues: Large ribosomal subunit protein uL30 (67 aa).

The protein belongs to the universal ribosomal protein uL30 family. As to quaternary structure, part of the 50S ribosomal subunit.

The sequence is that of Large ribosomal subunit protein uL30 from Hamiltonella defensa subsp. Acyrthosiphon pisum (strain 5AT).